Reading from the N-terminus, the 254-residue chain is Hydroxyacylglutathione hydrolase (254 aa).

Positions 52, 54, 56, 57, 109, 126, and 164 each coordinate Zn(2+).

The protein belongs to the metallo-beta-lactamase superfamily. Glyoxalase II family. As to quaternary structure, monomer. Requires Zn(2+) as cofactor.

The enzyme catalyses an S-(2-hydroxyacyl)glutathione + H2O = a 2-hydroxy carboxylate + glutathione + H(+). It participates in secondary metabolite metabolism; methylglyoxal degradation; (R)-lactate from methylglyoxal: step 2/2. Thiolesterase that catalyzes the hydrolysis of S-D-lactoyl-glutathione to form glutathione and D-lactic acid. The polypeptide is Hydroxyacylglutathione hydrolase (Stenotrophomonas maltophilia (strain R551-3)).